The sequence spans 705 residues: Polyribonucleotide nucleotidyltransferase (705 aa).

Mg(2+) is bound by residues Asp494 and Asp500. The region spanning 561–620 is the KH domain; sequence PRITTVKVKPEKVRAVIGTGGKNIRQIVSETGVTIDVEDDGTVTIASSDMEASARAIAMV. The S1 motif domain maps to 630–698; it reads GKIYRGTVKK…KQGKIRLSRK (69 aa).

Belongs to the polyribonucleotide nucleotidyltransferase family. The cofactor is Mg(2+).

Its subcellular location is the cytoplasm. It catalyses the reaction RNA(n+1) + phosphate = RNA(n) + a ribonucleoside 5'-diphosphate. Involved in mRNA degradation. Catalyzes the phosphorolysis of single-stranded polyribonucleotides processively in the 3'- to 5'-direction. This is Polyribonucleotide nucleotidyltransferase from Syntrophus aciditrophicus (strain SB).